Here is a 471-residue protein sequence, read N- to C-terminus: ATP synthase subunit beta (471 aa).

153 to 160 contributes to the ATP binding site; the sequence is GGAGVGKT.

The protein belongs to the ATPase alpha/beta chains family. As to quaternary structure, F-type ATPases have 2 components, CF(1) - the catalytic core - and CF(0) - the membrane proton channel. CF(1) has five subunits: alpha(3), beta(3), gamma(1), delta(1), epsilon(1). CF(0) has three main subunits: a(1), b(2) and c(9-12). The alpha and beta chains form an alternating ring which encloses part of the gamma chain. CF(1) is attached to CF(0) by a central stalk formed by the gamma and epsilon chains, while a peripheral stalk is formed by the delta and b chains.

The protein localises to the cell inner membrane. It catalyses the reaction ATP + H2O + 4 H(+)(in) = ADP + phosphate + 5 H(+)(out). Functionally, produces ATP from ADP in the presence of a proton gradient across the membrane. The catalytic sites are hosted primarily by the beta subunits. The protein is ATP synthase subunit beta of Verminephrobacter eiseniae (strain EF01-2).